The chain runs to 1334 residues: CRISPR-associated endonuclease Cas9 (1334 aa).

D10 acts as the For RuvC-like nuclease domain in catalysis. Mn(2+) contacts are provided by D10, E765, and E769. The HNH Cas9-type domain maps to 773–924 (TGKGKNNSRP…DKARFIHRQL (152 aa)). Catalysis depends on H843, which acts as the Proton acceptor for HNH nuclease domain. H986 lines the Mn(2+) pocket.

This sequence belongs to the CRISPR-associated protein Cas9 family. Subtype II-A subfamily. As to quaternary structure, monomer. Binds crRNA and tracrRNA. Requires Mg(2+) as cofactor.

Its function is as follows. CRISPR (clustered regularly interspaced short palindromic repeat) is an adaptive immune system that provides protection against mobile genetic elements (viruses, transposable elements and conjugative plasmids). CRISPR clusters contain spacers, sequences complementary to antecedent mobile elements, and target invading nucleic acids. CRISPR clusters are transcribed and processed into CRISPR RNA (crRNA). In type II CRISPR systems correct processing of pre-crRNA requires a trans-encoded small RNA (tracrRNA), endogenous ribonuclease 3 (rnc) and this protein. The tracrRNA serves as a guide for ribonuclease 3-aided processing of pre-crRNA. Subsequently Cas9/crRNA/tracrRNA endonucleolytically cleaves linear or circular dsDNA target complementary to the spacer; Cas9 is inactive in the absence of the 2 guide RNAs (gRNA). Cas9 recognizes the protospacer adjacent motif (PAM) in the CRISPR repeat sequences to help distinguish self versus nonself, as targets within the bacterial CRISPR locus do not have PAMs. PAM recognition is also required for catalytic activity. This is CRISPR-associated endonuclease Cas9 from Listeria innocua serovar 6a (strain ATCC BAA-680 / CLIP 11262).